Here is a 214-residue protein sequence, read N- to C-terminus: MSCDLVEWKIESSPIDYQEAVYFMQRKVDSISDGLQKELVWLLEHPALYTAGTGATVEDLLASNLLPVYSTNRGGKYTYHGPGQRIAYVMLNLKTRNKCNVRLYVKTLGDWIINTLSHFSIKSYFNPDLIGVWVTHNGIEKKIAAFGIRIRKWITYHGVSVNIYTDLSHYLGIVPCGIKEYGVTSFKQLGVNVSYEEFDIVLEKKFNEIFSSFN.

One can recognise a BPL/LPL catalytic domain in the interval 34-214 (GLQKELVWLL…KFNEIFSSFN (181 aa)). Substrate contacts are provided by residues 73–80 (RGGKYTYH), 145–147 (AFG), and 158–160 (GVS). Residue cysteine 176 is the Acyl-thioester intermediate of the active site.

This sequence belongs to the LipB family.

Its subcellular location is the cytoplasm. It carries out the reaction octanoyl-[ACP] + L-lysyl-[protein] = N(6)-octanoyl-L-lysyl-[protein] + holo-[ACP] + H(+). The protein operates within protein modification; protein lipoylation via endogenous pathway; protein N(6)-(lipoyl)lysine from octanoyl-[acyl-carrier-protein]: step 1/2. In terms of biological role, catalyzes the transfer of endogenously produced octanoic acid from octanoyl-acyl-carrier-protein onto the lipoyl domains of lipoate-dependent enzymes. Lipoyl-ACP can also act as a substrate although octanoyl-ACP is likely to be the physiological substrate. This chain is Octanoyltransferase, found in Ehrlichia canis (strain Jake).